The following is an 86-amino-acid chain: MYCIELTIKLSPMPLVVQRKEHGEAKRLYSDVVGSIENGNPRLLELTCEKVEDKRITVLVSEITAVQIYEKTSSSTSKRPGFSLQN.

Belongs to the UPF0367 family.

The sequence is that of UPF0367 protein PMN2A_1492 from Prochlorococcus marinus (strain NATL2A).